Consider the following 150-residue polypeptide: Large ribosomal subunit protein bL17 (150 aa).

The segment at 126-150 (DRAKRREERLKAQREGRDHEEETDE) is disordered.

It belongs to the bacterial ribosomal protein bL17 family. In terms of assembly, part of the 50S ribosomal subunit. Contacts protein L32.

The chain is Large ribosomal subunit protein bL17 from Solibacter usitatus (strain Ellin6076).